Consider the following 770-residue polypeptide: ATP-dependent RNA helicase HCA4 (770 aa).

A Q motif motif is present at residues 41-69; it reads KFFKDLPISDPTLKGLRESSFIKLTEIQA. Residues 72 to 246 form the Helicase ATP-binding domain; sequence IPVSLQGHDV…RLSLTDYKTV (175 aa). 85–92 is an ATP binding site; sequence AKTGSGKT. The DEAD box signature appears at 194-197; sequence DEAD. In terms of domain architecture, Helicase C-terminal spans 278 to 437; that stretch reads KLDILFSFIK…SIKPQLQSLL (160 aa). 4 positions are modified to phosphoserine: S692, S710, S714, and S743. The segment at 705 to 724 is disordered; sequence GTGNLSDDMSDGDMPDSEGH.

This sequence belongs to the DEAD box helicase family. DDX10/DBP4 subfamily. Interacts with the U3 and U14 snoRNAs. Associates with pre-ribosomal complexes.

Its subcellular location is the nucleus. It localises to the nucleolus. It carries out the reaction ATP + H2O = ADP + phosphate + H(+). Its function is as follows. ATP-dependent RNA helicase required for ribosome biogenesis. Involved in the release of U14 snoRNA in pre-ribosomal complexes. Required for pre-rRNA cleavage at site A2. This Saccharomyces cerevisiae (strain ATCC 204508 / S288c) (Baker's yeast) protein is ATP-dependent RNA helicase HCA4 (HCA4).